A 466-amino-acid polypeptide reads, in one-letter code: Cysteine--tRNA ligase (466 aa).

Position 29 (cysteine 29) interacts with Zn(2+). The 'HIGH' region signature appears at 31 to 41 (ATVQAPPHIGH). 3 residues coordinate Zn(2+): cysteine 211, histidine 236, and glutamate 240. Positions 267-271 (KMSKS) match the 'KMSKS' region motif. Lysine 270 provides a ligand contact to ATP.

The protein belongs to the class-I aminoacyl-tRNA synthetase family. In terms of assembly, monomer. Zn(2+) serves as cofactor.

The protein resides in the cytoplasm. The enzyme catalyses tRNA(Cys) + L-cysteine + ATP = L-cysteinyl-tRNA(Cys) + AMP + diphosphate. The polypeptide is Cysteine--tRNA ligase (Thermobifida fusca (strain YX)).